Consider the following 85-residue polypeptide: Probable Sec-independent protein translocase protein TatE (85 aa).

Residues 1-21 (MEGLSITKLLVVGILIVLLFG) traverse the membrane as a helical segment. The interval 64 to 85 (KTVAETKAASDSQAAASVERKD) is disordered.

Belongs to the TatA/E family. TatE subfamily.

Its subcellular location is the cell inner membrane. In terms of biological role, part of the twin-arginine translocation (Tat) system that transports large folded proteins containing a characteristic twin-arginine motif in their signal peptide across membranes. TatE shares overlapping functions with TatA. In Yersinia pestis, this protein is Probable Sec-independent protein translocase protein TatE.